The chain runs to 357 residues: DENN domain-containing protein 10 (357 aa).

Residues 1-136 enclose the uDENN domain; sequence MAAVVAMDTQ…IAVLTKGICQ (136 aa). In terms of domain architecture, cDENN spans 152–299; it reads KAYLAGSIKD…PEKSDSQVIQ (148 aa). In terms of domain architecture, dDENN spans 301-357; sequence IALKTKEIFTHLAPFSEVSDDGGKVILNVEALKQQRFPPATENFLYHLAAAEQMLKV.

This sequence belongs to the DENND10 family. Interacts with the coiled-coil heterodimer of CCDC22 and CCDC93; the interaction is direct. Interacts with RAB27A and RAB27B (GDP-bound forms preferentially).

The protein localises to the late endosome. Its function is as follows. Guanine nucleotide exchange factor (GEF) regulating homeostasis of late endocytic pathway, including endosomal positioning, maturation and secretion, possibly through activating Rab proteins such as RAB27A and RAB27B. Promotes the exchange of GDP to GTP, converting inactive GDP-bound RAB27A and RAB27B into their active GTP-bound form. The chain is DENN domain-containing protein 10 from Mus musculus (Mouse).